The chain runs to 343 residues: UPF0324 membrane protein LJ_1117 (343 aa).

Helical transmembrane passes span 10-27 (FGLA…GIFL), 32-54 (YVNL…VLPV), 64-86 (IGFI…LNLT), 91-113 (AGIK…TYWL), 123-145 (LAVL…VSPQ), 157-179 (NEVL…EIVI), 219-241 (ALIM…GYWY), 262-284 (IPWF…FPPV), 288-310 (GLVQ…SVNF), and 317-339 (GGTV…IIMS).

Belongs to the UPF0324 family.

It localises to the cell membrane. This Lactobacillus johnsonii (strain CNCM I-12250 / La1 / NCC 533) protein is UPF0324 membrane protein LJ_1117.